We begin with the raw amino-acid sequence, 199 residues long: Recombination protein RecR (199 aa).

A C4-type zinc finger spans residues 57–72; sequence CQSCRTFTEETYCPIC. The 96-residue stretch at 81-176 folds into the Toprim domain; that stretch reads SVICVVETPA…AVSRIAHGVP (96 aa).

The protein belongs to the RecR family.

May play a role in DNA repair. It seems to be involved in an RecBC-independent recombinational process of DNA repair. It may act with RecF and RecO. The polypeptide is Recombination protein RecR (Shewanella piezotolerans (strain WP3 / JCM 13877)).